The chain runs to 371 residues: Alanine racemase (371 aa).

The Proton acceptor; specific for D-alanine role is filled by lysine 40. The residue at position 40 (lysine 40) is an N6-(pyridoxal phosphate)lysine. Arginine 136 is a binding site for substrate. The Proton acceptor; specific for L-alanine role is filled by tyrosine 263. Methionine 310 lines the substrate pocket.

This sequence belongs to the alanine racemase family. Pyridoxal 5'-phosphate is required as a cofactor.

It carries out the reaction L-alanine = D-alanine. It functions in the pathway amino-acid biosynthesis; D-alanine biosynthesis; D-alanine from L-alanine: step 1/1. Functionally, catalyzes the interconversion of L-alanine and D-alanine. May also act on other amino acids. This is Alanine racemase (alr) from Streptococcus mutans serotype c (strain ATCC 700610 / UA159).